The following is a 219-amino-acid chain: Ras-related protein RABA5d (219 aa).

N-acetylserine is present on Ser-2. 19–26 (GDSAVGKS) contacts GTP. Residues 41-49 (SKATIGVEF) carry the Effector region motif. Residues 67-71 (DTAGQ), 125-128 (NKCD), and 155-156 (SA) contribute to the GTP site. Residues Cys-215 and Cys-216 are each lipidated (S-geranylgeranyl cysteine).

The protein belongs to the small GTPase superfamily. Rab family.

The protein localises to the cell membrane. In terms of biological role, intracellular vesicle trafficking and protein transport. In Arabidopsis thaliana (Mouse-ear cress), this protein is Ras-related protein RABA5d (RABA5D).